A 305-amino-acid chain; its full sequence is Homoserine kinase (305 aa).

90 to 100 contributes to the ATP binding site; that stretch reads PLARGLGSSAS.

The protein belongs to the GHMP kinase family. Homoserine kinase subfamily.

It is found in the cytoplasm. It catalyses the reaction L-homoserine + ATP = O-phospho-L-homoserine + ADP + H(+). It participates in amino-acid biosynthesis; L-threonine biosynthesis; L-threonine from L-aspartate: step 4/5. Its function is as follows. Catalyzes the ATP-dependent phosphorylation of L-homoserine to L-homoserine phosphate. The polypeptide is Homoserine kinase (Staphylococcus saprophyticus subsp. saprophyticus (strain ATCC 15305 / DSM 20229 / NCIMB 8711 / NCTC 7292 / S-41)).